The primary structure comprises 340 residues: Gallate dioxygenase (340 aa).

His-45 functions as the Proton donor in the catalytic mechanism. Catalysis depends on His-113, which acts as the Proton acceptor.

This sequence belongs to the LigB/MhpB extradiol dioxygenase family. Fe(2+) serves as cofactor.

It carries out the reaction 3,4,5-trihydroxybenzoate + O2 = (1E)-4-oxobut-1-ene-1,2,4-tricarboxylate + 2 H(+). Functionally, ring-cleavage dioxygenase that acts specifically on gallate to produce the keto-tautomer of 4-oxalomesaconate. Mediates the first step of gallate degradation pathway. The sequence is that of Gallate dioxygenase (galA) from Pseudomonas putida (strain ATCC 47054 / DSM 6125 / CFBP 8728 / NCIMB 11950 / KT2440).